A 226-amino-acid chain; its full sequence is MSAPAAEPQAAPSRPTIGVLALQGDVREHLAALRACGAEPVLVRRVGELEAVDGLVLPGGESTAISKLLQVFDLLDPLRARLRDGMPAFGSCAGMILLASEVLDTRPDAQHLSGIDMTVRRNAFGRQVDSFETDLDFAGLDDGPVRAVFIRAPWVERAGDGVQVLATVPDGPSRGRIVAVRQGNVLATSFHPEVTGDLRVHRMFVDIVRAAGDRAGNVHTPDVQPT.

L-glutamine is bound at residue 60–62 (GES). C92 (nucleophile) is an active-site residue. Residues R121 and 150–151 (IR) contribute to the L-glutamine site. Residues H191 and E193 each act as charge relay system in the active site.

Belongs to the glutaminase PdxT/SNO family. In the presence of PdxS, forms a dodecamer of heterodimers. Only shows activity in the heterodimer.

The catalysed reaction is aldehydo-D-ribose 5-phosphate + D-glyceraldehyde 3-phosphate + L-glutamine = pyridoxal 5'-phosphate + L-glutamate + phosphate + 3 H2O + H(+). It carries out the reaction L-glutamine + H2O = L-glutamate + NH4(+). It functions in the pathway cofactor biosynthesis; pyridoxal 5'-phosphate biosynthesis. Catalyzes the hydrolysis of glutamine to glutamate and ammonia as part of the biosynthesis of pyridoxal 5'-phosphate. The resulting ammonia molecule is channeled to the active site of PdxS. This chain is Pyridoxal 5'-phosphate synthase subunit PdxT, found in Nocardia farcinica (strain IFM 10152).